Reading from the N-terminus, the 417-residue chain is NADH-quinone oxidoreductase subunit D 1 (417 aa).

The protein belongs to the complex I 49 kDa subunit family. As to quaternary structure, NDH-1 is composed of 14 different subunits. Subunits NuoB, C, D, E, F, and G constitute the peripheral sector of the complex.

Its subcellular location is the cell membrane. The catalysed reaction is a quinone + NADH + 5 H(+)(in) = a quinol + NAD(+) + 4 H(+)(out). Its function is as follows. NDH-1 shuttles electrons from NADH, via FMN and iron-sulfur (Fe-S) centers, to quinones in the respiratory chain. The immediate electron acceptor for the enzyme in this species is believed to be ubiquinone. Couples the redox reaction to proton translocation (for every two electrons transferred, four hydrogen ions are translocated across the cytoplasmic membrane), and thus conserves the redox energy in a proton gradient. This Roseiflexus castenholzii (strain DSM 13941 / HLO8) protein is NADH-quinone oxidoreductase subunit D 1.